The following is a 68-amino-acid chain: Large ribosomal subunit protein uL30 (68 aa).

It belongs to the universal ribosomal protein uL30 family. In terms of assembly, part of the 50S ribosomal subunit.

In Paenarthrobacter aurescens (strain TC1), this protein is Large ribosomal subunit protein uL30.